A 545-amino-acid chain; its full sequence is Myotubularin-related protein 9 (545 aa).

An N-acetylmethionine modification is found at Met1. Residues 4-99 enclose the GRAM domain; sequence AELIKTPRVD…LNIASSIEAL (96 aa). The 376-residue stretch at 123 to 498 folds into the Myotubularin phosphatase domain; the sequence is GWHSFLPEQE…QSLQLWEGIF (376 aa). The stretch at 508–542 forms a coiled coil; it reads LDEAYEEMVNIIEYNKELQAKVNVLRRQLAELETE.

The protein belongs to the protein-tyrosine phosphatase family. Non-receptor class myotubularin subfamily. In terms of assembly, homodimer. Heterodimer (via C-terminus) with lipid phosphatase MTMR6 (via C-terminus). Heterodimer (via coiled coil domain) with lipid phosphatase MTMR7 (via C-terminus).

The protein localises to the cytoplasm. It localises to the cell projection. It is found in the ruffle membrane. Its subcellular location is the perinuclear region. The protein resides in the endoplasmic reticulum. Functionally, acts as an adapter for myotubularin-related phosphatases. Increases lipid phosphatase MTMR6 catalytic activity, specifically towards phosphatidylinositol 3,5-bisphosphate, and MTMR6 binding affinity for phosphorylated phosphatidylinositols. Positively regulates lipid phosphatase MTMR7 catalytic activity. The formation of the MTMR6-MTMR9 complex, stabilizes both MTMR6 and MTMR9 protein levels. Plays a role in the late stages of macropinocytosis possibly by regulating MTMR6-mediated dephosphorylation of phosphatidylinositol 3-phosphate in membrane ruffles. Negatively regulates DNA damage-induced apoptosis, in part via its association with MTMR6. Does not bind mono-, di- and tri-phosphorylated phosphatidylinositols, phosphatidic acid and phosphatidylserine. The polypeptide is Myotubularin-related protein 9 (Mtmr9) (Mus musculus (Mouse)).